We begin with the raw amino-acid sequence, 1657 residues long: Androglobin (1657 aa).

Basic residues predominate over residues 1-11 (MASKQAKRKEV). 2 disordered regions span residues 1–40 (MASKQAKRKEVHRINSAHGSDKSKDLYHFGSNVPPGSFEQ) and 321–398 (TKEN…SSDV). Residues 70–402 (KDKTAKSPIF…RPSSDVQYSM (333 aa)) form the Calpain catalytic domain. Residues 321-386 (TKENKDGKDG…DGEKEKEKFK (66 aa)) are compositionally biased toward basic and acidic residues. The Globin; C-terminal part domain occupies 762 to 889 (HVCSMTTFVI…EDVSLAEWVD (128 aa)). Heme b is bound by residues Gln791 and His823. The region spanning 905 to 934 (EIAAAVKIQSMWKGCYVRLLMKARKPETKE) is the IQ domain. The Globin; N-terminal part domain occupies 935 to 967 (NVTVADTLQKIWAVLEMNLEQYALSLLRLMFKS). Disordered stretches follow at residues 1184 to 1226 (SKQV…TDTG), 1288 to 1356 (KHEE…QEDP), 1422 to 1459 (TTDTTTSAPSPETLSVSQSQTKSSEEGELDTGKYADIK), and 1638 to 1657 (IEKKSPASDSQKKKKVGKKK). The span at 1321–1336 (EKSAEKEKLAKEKQAP) shows a compositional bias: basic and acidic residues. Polar residues-rich tracts occupy residues 1341–1351 (QQVQMPTAVHS) and 1422–1443 (TTDTTTSAPSPETLSVSQSQTK). Residues 1585–1640 (DEVLEMYGEMRDSVDEARQKILDIREVYRNKLLEAERLRMEALAAQEAAVKIEIEK) adopt a coiled-coil conformation.

This sequence in the central section; belongs to the globin family. The protein in the N-terminal section; belongs to the peptidase C2 family. In terms of assembly, interacts with septin SEPT10; contributes to in vitro proteolytic cleavage of SEPT10 in a calmodulin-dependent manner. Interacts with CFAP69. Interacts with SPEF2. May interact with calmodulin. Strongly expressed in testis and lung. Weakly expressed in heart, brain, spleen, kidney and tongue.

The protein resides in the cell projection. It is found in the cilium. The protein localises to the flagellum. Functionally, probable chimeric globin with a bis-histidyl six-coordinate heme-iron atom through which it could bind dioxygen, carbon monoxide and nitric oxide. Required for sperm flagellum formation and maturation of elongating spermatids, thus playing an essential role in male fertility. The chain is Androglobin from Mus musculus (Mouse).